The primary structure comprises 494 residues: Ubiquitin carboxyl-terminal hydrolase 27 (494 aa).

Residues 30 to 50 (LSFAGLLGVAGFVFAQQHGLF) traverse the membrane as a helical segment. The 421-residue stretch at 74 to 494 (PGLQNLGNNC…EASLLFYERL (421 aa)) folds into the USP domain. The active-site Nucleophile is C83. The active-site Proton acceptor is the H440.

It belongs to the peptidase C19 family.

The protein resides in the membrane. The catalysed reaction is Thiol-dependent hydrolysis of ester, thioester, amide, peptide and isopeptide bonds formed by the C-terminal Gly of ubiquitin (a 76-residue protein attached to proteins as an intracellular targeting signal).. Its function is as follows. Recognizes and hydrolyzes the peptide bond at the C-terminal Gly of ubiquitin. Involved in the processing of poly-ubiquitin precursors as well as that of ubiquitinated proteins. In Arabidopsis thaliana (Mouse-ear cress), this protein is Ubiquitin carboxyl-terminal hydrolase 27 (UBP27).